Reading from the N-terminus, the 274-residue chain is Orotidine 5'-phosphate decarboxylase (274 aa).

The active-site Proton donor is the K96.

It belongs to the OMP decarboxylase family. Type 2 subfamily.

It carries out the reaction orotidine 5'-phosphate + H(+) = UMP + CO2. It participates in pyrimidine metabolism; UMP biosynthesis via de novo pathway; UMP from orotate: step 2/2. This chain is Orotidine 5'-phosphate decarboxylase, found in Bacteroides fragilis (strain YCH46).